The chain runs to 240 residues: Putative tyrosine phosphatase 067L (240 aa).

The Tyrosine-protein phosphatase domain maps to Gln-3 to Gln-151. Cys-96 serves as the catalytic Phosphocysteine intermediate.

This sequence belongs to the protein-tyrosine phosphatase family.

The enzyme catalyses O-phospho-L-tyrosyl-[protein] + H2O = L-tyrosyl-[protein] + phosphate. The polypeptide is Putative tyrosine phosphatase 067L (Aedes vexans (Inland floodwater mosquito)).